The following is a 386-amino-acid chain: MNLFLKKLLKNDATGGVVLIVAAAFAMFLANNDSTRHAYQAMLTLPVQFRFGALDINKDLLLWINDALMALFFLMIGLEVKRELMMGSLKGRERAMFPLIAALGGMLAPGLIYAAFNHQDAQAIHGWAIPTATDIAFALGILALLGSRVPAALKMFLMALAVIDDLGAIVIIALFYTSELSLISLTVAAASIAVLAVLNGCGVRKTSVYLAVGMVLWVAVLKSGVHATLAGVIVGLFIPLKKQEGHSPAIELAHGLHPWVSWLILPLFAFANAGISLSGVSLNGLFSAVPLGITLGLFIGKPLGITLICWLAVKLKIAALPENTRLIDIAAVGVLCGIGFTMSIFIASLAFDGAHEELVTLAKLGILSGSVISALVGYTLLRVKLR.

11 consecutive transmembrane segments (helical) span residues 11–31 (NDATGGVVLIVAAAFAMFLAN), 60–80 (LLLWINDALMALFFLMIGLEV), 96–116 (MFPLIAALGGMLAPGLIYAAF), 126–146 (GWAIPTATDIAFALGILALLG), 155–175 (MFLMALAVIDDLGAIVIIALF), 180–200 (LSLISLTVAAASIAVLAVLNG), 218–238 (VAVLKSGVHATLAGVIVGLFI), 260–280 (VSWLILPLFAFANAGISLSGV), 293–313 (ITLGLFIGKPLGITLICWLAV), 326–346 (LIDIAAVGVLCGIGFTMSIFI), and 358–378 (LVTLAKLGILSGSVISALVGY).

Belongs to the NhaA Na(+)/H(+) (TC 2.A.33) antiporter family.

The protein resides in the cell inner membrane. It carries out the reaction Na(+)(in) + 2 H(+)(out) = Na(+)(out) + 2 H(+)(in). Its function is as follows. Na(+)/H(+) antiporter that extrudes sodium in exchange for external protons. The polypeptide is Na(+)/H(+) antiporter NhaA (Erwinia tasmaniensis (strain DSM 17950 / CFBP 7177 / CIP 109463 / NCPPB 4357 / Et1/99)).